Reading from the N-terminus, the 418-residue chain is EPS I polysaccharide export inner membrane protein EpsF (418 aa).

The next 10 helical transmembrane spans lie at 21–41 (VLVV…FPIA), 45–65 (CAAI…LATA), 142–162 (PLMV…IAIY), 170–190 (YVVF…GSAI), 222–242 (AGTH…MLFL), 262–282 (LLVL…EFVM), 296–316 (SAWE…AWLF), 326–346 (LTYF…PAVG), 347–367 (ARLF…FFFA), and 377–397 (KTLA…IVDV).

The protein to S.marcescens SfuB.

The protein resides in the cell inner membrane. In terms of biological role, probably involved in polymerization and/or export of exopolysaccharide EPS I which functions as a virulence factor. May play a role in export of EPS I or its intermediates across the membranes. The chain is EPS I polysaccharide export inner membrane protein EpsF (epsF) from Ralstonia solanacearum (Pseudomonas solanacearum).